Consider the following 404-residue polypeptide: Serine/threonine transporter SstT (404 aa).

9 consecutive transmembrane segments (helical) span residues 11–31, 44–64, 82–102, 144–164, 179–199, 218–238, 290–310, 316–336, and 363–383; these read IINA…IILA, LGGL…FVLV, IISL…TMSF, TANY…LHHA, VSFI…GLVA, GVLL…MVFI, IPLG…VLTL, MGIQ…AISA, and VAMQ…SAET.

The protein belongs to the dicarboxylate/amino acid:cation symporter (DAACS) (TC 2.A.23) family.

It is found in the cell inner membrane. It carries out the reaction L-serine(in) + Na(+)(in) = L-serine(out) + Na(+)(out). It catalyses the reaction L-threonine(in) + Na(+)(in) = L-threonine(out) + Na(+)(out). Functionally, involved in the import of serine and threonine into the cell, with the concomitant import of sodium (symport system). The protein is Serine/threonine transporter SstT of Desulfotalea psychrophila (strain LSv54 / DSM 12343).